Consider the following 64-residue polypeptide: Large ribosomal subunit protein bL35 (64 aa).

Residues 1 to 26 (MPKMKSHRGASKRFKRTASGKLKRGR) are compositionally biased toward basic residues. Disordered stretches follow at residues 1–28 (MPKMKSHRGASKRFKRTASGKLKRGRAY) and 33–52 (FGNKSTKAKRKLRKASMVSS).

This sequence belongs to the bacterial ribosomal protein bL35 family.

The sequence is that of Large ribosomal subunit protein bL35 from Exiguobacterium sibiricum (strain DSM 17290 / CCUG 55495 / CIP 109462 / JCM 13490 / 255-15).